We begin with the raw amino-acid sequence, 591 residues long: Monoterpene synthase 8, chloroplastic (591 aa).

The N-terminal 46 residues, 1-46 (MSLLLAPPSYFPFRGLRRSTAAKQPPCLRLVKCTADRQSPEAARRS), are a transit peptide targeting the chloroplast. Mg(2+) contacts are provided by D346, D350, and E497. The short motif at 346–350 (DDVYD) is the DDXXD motif element.

Belongs to the terpene synthase family. Tpsa subfamily. Mg(2+) serves as cofactor. The cofactor is Mn(2+). Highly expressed in flowers, petals and sepals, but almost undetectable in vegetative organs.

The protein resides in the plastid. Its subcellular location is the chloroplast. It catalyses the reaction (2E)-geranyl diphosphate + H2O = (R)-linalool + diphosphate. It carries out the reaction (2E)-geranyl diphosphate + H2O = (S)-linalool + diphosphate. The catalysed reaction is (2E,6E)-farnesyl diphosphate = (S)-beta-bisabolene + diphosphate. The enzyme catalyses (2E,6E)-farnesyl diphosphate = (E,R)-alpha-bisabolene + diphosphate. It catalyses the reaction (2E,6E)-farnesyl diphosphate = (E)-beta-farnesene + diphosphate. It carries out the reaction (2E,6E)-farnesyl diphosphate = beta-sesquiphellandrene + diphosphate. The catalysed reaction is (2E,6E)-farnesyl diphosphate = (1S,5S,6R)-alpha-bergamotene + diphosphate. Its pathway is secondary metabolite biosynthesis; terpenoid biosynthesis. Its function is as follows. Sesquiterpene and monoterpene synthase involved in the biosynthesis of volatile compounds present in floral scent. Mediates the conversion of (2E)-geranyl diphosphate (GPP) into linalool, with trace levels of myrcene, limonene and (Z)-beta-ocimene. Also acts as a sesquiterpene synthase by catalyzing the conversion of farnesyl diphosphate (FPP) to alpha-bergamotene and beta-bisabolene and to minor products including alpha-curcumene, cis-alpha-bisabolene, beta-farnesene and beta-sesquiphellandrene, as well as seven other unidentified sesquiterpenes. In Hedychium coronarium (White butterfly ginger-lily), this protein is Monoterpene synthase 8, chloroplastic.